Consider the following 20-residue polypeptide: Toxin CpTx-4a (20 aa).

It belongs to the spider toxin CSTX family. In terms of tissue distribution, expressed by the venom gland.

Its subcellular location is the secreted. Functionally, spider venom toxin that exhibits cytolytic activity by forming an alpha-helix across the membrane. Lethal to insect larvae. In Cheiracanthium punctorium (Yellow sac spider), this protein is Toxin CpTx-4a.